The following is a 272-amino-acid chain: Indole-3-glycerol phosphate synthase (272 aa).

It belongs to the TrpC family.

The catalysed reaction is 1-(2-carboxyphenylamino)-1-deoxy-D-ribulose 5-phosphate + H(+) = (1S,2R)-1-C-(indol-3-yl)glycerol 3-phosphate + CO2 + H2O. Its pathway is amino-acid biosynthesis; L-tryptophan biosynthesis; L-tryptophan from chorismate: step 4/5. In Mycobacterium ulcerans (strain Agy99), this protein is Indole-3-glycerol phosphate synthase.